A 531-amino-acid polypeptide reads, in one-letter code: Zinc finger protein 837 (531 aa).

A disordered region spans residues 1 to 101 (MEAPAQKAGQ…CGPTSSQNPE (101 aa)). The span at 24-50 (AREKRPEEPRPLEEDRAGSRPTQKGDL) shows a compositional bias: basic and acidic residues. 8 consecutive C2H2-type zinc fingers follow at residues 271-293 (YACDECGKAFTRTSSLLQHQRIH), 299-321 (YECAECGKAFVRCSGLYRHQKTH), 363-385 (YECADCAKAFGLFSHLVEHRRVH), 391-413 (YACPECGKAFNQRSNLSRHQRTH), 419-441 (YACPLCEKAFKGRSGLVQHQRAH), 447-469 (YGCSECGKTFRGCSELRQHERLH), 475-497 (YICRDCGKAFVRNCSLVRHLRTH), and 503-525 (YACGDCGRAFSQRSNLNEHRKRH).

The protein belongs to the krueppel C2H2-type zinc-finger protein family.

It localises to the nucleus. Functionally, may be involved in transcriptional regulation. This chain is Zinc finger protein 837 (ZNF837), found in Homo sapiens (Human).